The chain runs to 299 residues: Oxygen-dependent coproporphyrinogen-III oxidase (299 aa).

Residue Ser-92 coordinates substrate. A divalent metal cation-binding residues include His-96 and His-106. The active-site Proton donor is the His-106. Residue 108–110 (NVR) participates in substrate binding. Positions 145 and 175 each coordinate a divalent metal cation. The important for dimerization stretch occupies residues 240–275 (YVEFNLVWDRGTLFGLQTGGRTESILMSMPPLVRWE). 258-260 (GGR) provides a ligand contact to substrate.

It belongs to the aerobic coproporphyrinogen-III oxidase family. As to quaternary structure, homodimer. It depends on a divalent metal cation as a cofactor.

It is found in the cytoplasm. It carries out the reaction coproporphyrinogen III + O2 + 2 H(+) = protoporphyrinogen IX + 2 CO2 + 2 H2O. It participates in porphyrin-containing compound metabolism; protoporphyrin-IX biosynthesis; protoporphyrinogen-IX from coproporphyrinogen-III (O2 route): step 1/1. Functionally, involved in the heme biosynthesis. Catalyzes the aerobic oxidative decarboxylation of propionate groups of rings A and B of coproporphyrinogen-III to yield the vinyl groups in protoporphyrinogen-IX. This chain is Oxygen-dependent coproporphyrinogen-III oxidase, found in Shigella boydii serotype 18 (strain CDC 3083-94 / BS512).